The following is a 108-amino-acid chain: Small ribosomal subunit protein uS17 (108 aa).

The segment at 1-26 (MREKMAEATETQASETSTRGRPKTRV) is disordered. The span at 8–17 (ATETQASETS) shows a compositional bias: low complexity.

It belongs to the universal ribosomal protein uS17 family. As to quaternary structure, part of the 30S ribosomal subunit.

Functionally, one of the primary rRNA binding proteins, it binds specifically to the 5'-end of 16S ribosomal RNA. This chain is Small ribosomal subunit protein uS17, found in Myxococcus xanthus (strain DK1622).